The chain runs to 313 residues: Protein FixB (313 aa).

Residue 255 to 283 (LYLAVGISGQIQHMVGANASQTIFAINKD) coordinates FAD.

The protein belongs to the ETF alpha-subunit/FixB family. Heterodimer of FixA and FixB.

It functions in the pathway amine and polyamine metabolism; carnitine metabolism. Its function is as follows. Required for anaerobic carnitine reduction. May bring reductant to CaiA. The sequence is that of Protein FixB from Escherichia coli O7:K1 (strain IAI39 / ExPEC).